The following is a 617-amino-acid chain: ATP-dependent RNA helicase DBP1 (617 aa).

The tract at residues Met-1–Ser-90 is disordered. Residues Lys-7–Glu-17 show a composition bias toward polar residues. Basic and acidic residues predominate over residues Pro-38–Arg-58. Residues Gly-79–Ser-90 are compositionally biased toward polar residues. The Q motif motif lies at Leu-154–Lys-182. In terms of domain architecture, Helicase ATP-binding spans Ile-185–Leu-374. Residue Ala-198–Thr-205 coordinates ATP. Residues Asp-318–Asp-321 carry the DEAD box motif. Residues Asn-385–Ser-545 enclose the Helicase C-terminal domain. Residues Ser-542–Trp-617 are disordered. Positions Phe-580–Gly-594 are enriched in polar residues.

This sequence belongs to the DEAD box helicase family. DDX3/DED1 subfamily.

It localises to the cytoplasm. The enzyme catalyses ATP + H2O = ADP + phosphate + H(+). In terms of biological role, ATP-binding RNA helicase involved in translation initiation. Remodels RNA in response to ADP and ATP concentrations by facilitating disruption, but also formation of RNA duplexes. Redundant to DED1, may be required in conditions in which DED1 expression is decreased. This is ATP-dependent RNA helicase DBP1 (DBP1) from Saccharomyces cerevisiae (strain YJM789) (Baker's yeast).